The primary structure comprises 545 residues: Tripartite motif-containing 55 (545 aa).

The RING-type zinc-finger motif lies at 26–82 (CPICLEMFTKPVVILPCQHNLCRKCASDIFQASNPYLPTRGGTTVASGGRFRCPSCR). The B box-type zinc-finger motif lies at 119-161 (LDQPMCEEHEEERINIYCLNCEVPTCSLCKVFGAHKDCQVAPL). Zn(2+) is bound by residues cysteine 124, histidine 127, cysteine 147, and histidine 153. Positions 269–327 (MDEPEMAVFLQNAKTLLQKIVEASKAFQMEKLEQGYEIMSNFTVNLNREEKIIREIDFS) constitute a COS domain. Disordered stretches follow at residues 324–352 (IDFS…VEVE), 359–378 (IASS…SQLP), and 417–532 (SQQT…EPAR). Residues 328 to 352 (REEEEEEDAGEIDEEGEGEDAVEVE) are compositionally biased toward acidic residues. Residues 417–428 (SQQTTQSETSGP) show a composition bias toward polar residues. Positions 474-485 (SSVQSAEVAEAA) are enriched in low complexity. Over residues 486–506 (TNEQAAVSGKESSSTAATSQI) the composition is skewed to polar residues.

Targeted for degradation through the proteasomal and lysosomal pathways in the presence of SUMO3. Widely expressed in various tissues, besides skeletal muscle and heart, such as brain, lung, liver, spleen and kidney.

It localises to the nucleus. The protein localises to the cytoplasm. The enzyme catalyses S-ubiquitinyl-[E2 ubiquitin-conjugating enzyme]-L-cysteine + [acceptor protein]-L-lysine = [E2 ubiquitin-conjugating enzyme]-L-cysteine + N(6)-ubiquitinyl-[acceptor protein]-L-lysine.. Its function is as follows. E3 ubiquitin ligase that plays an important role in regulating cardiac development and contractility, muscle growth, metabolism, and fiber-type differentiation. Acts as a critical factor that regulates cardiomyocyte size during development in concert with TRIM63 by regulating E2F1-mediated gene expression. Plays a role in apoptosis induction in cardiomyocytes by promoting ubiquitination of the DUSP1 phosphatase. Promotes non-canonical NF-kappa-B signaling and B-cell-mediated immune responses by mediating NFKB2 'Lys-48'-linked ubiquitination and processing. In turn, NFKB2 is further processed by valosin-containing protein/VCP, an ATPase that mediates ubiquitin-dependent protein degradation by the proteasome. May play a role in preventing macrophages from producing inflammatory factors and migrating by downregulating the level of nuclear NF-kappa-B subunit RELA. Modifies also PPARG via polyubiquitination and accelerates PPARG proteasomal degradation to inhibit its activity. In Mus musculus (Mouse), this protein is Tripartite motif-containing 55 (Trim55).